The primary structure comprises 238 residues: Hydatid disease diagnostic antigen P-29 (238 aa).

Residues 18 to 238 (GELVNKNEKT…AKECSMMLGE (221 aa)) form the BAR domain.

The protein is Hydatid disease diagnostic antigen P-29 of Echinococcus granulosus (Hydatid tapeworm).